A 352-amino-acid chain; its full sequence is Cobalt transport protein NhlF (352 aa).

The next 8 membrane-spanning stretches (helical) occupy residues 23 to 43 (LASVVGAIVILHVLGVALYLG), 46 to 66 (GNPAAAGGLAGSGVLAYVLGV), 95 to 115 (VGFFFAMGHSTVVVVLALVVA), 131 to 151 (EIGGLVATVVAVTFLSIVAGL), 206 to 226 (PVGLLMGLGLETASEVTLLTL), 230 to 250 (AATGGTLSIAAVLSLPLLFAA), 290 to 310 (VIGLFVAGIYVCALLAHLPMF), and 323 to 343 (FEFLGYAVAAAFILTWTGALL).

The protein belongs to the NiCoT transporter (TC 2.A.52) family.

Its subcellular location is the cell membrane. Its activity is regulated as follows. Cobalt uptake is inhibited by uncouplers (CCCP and 3,5-di-tert-butyl-4-hydroxybenzylidenemalononitrile) and by the addition of excess nickel. Its function is as follows. Mediates energy-dependent uptake of cobalt ions into the cell. Can also transport nickel ions, but cobalt is the preferred substrate. The chain is Cobalt transport protein NhlF (nhlF) from Rhodococcus rhodochrous.